We begin with the raw amino-acid sequence, 142 residues long: Large ribosomal subunit protein uL13 (142 aa).

This sequence belongs to the universal ribosomal protein uL13 family. In terms of assembly, part of the 50S ribosomal subunit.

This protein is one of the early assembly proteins of the 50S ribosomal subunit, although it is not seen to bind rRNA by itself. It is important during the early stages of 50S assembly. This Koribacter versatilis (strain Ellin345) protein is Large ribosomal subunit protein uL13.